The sequence spans 69 residues: UPF0337 protein XAC4007 (69 aa).

Belongs to the UPF0337 (CsbD) family.

This chain is UPF0337 protein XAC4007, found in Xanthomonas axonopodis pv. citri (strain 306).